A 347-amino-acid polypeptide reads, in one-letter code: NADH-ubiquinone oxidoreductase chain 2 (347 aa).

Helical transmembrane passes span 3–23 (PPIL…VLMS), 25–45 (HWLM…PILM), 59–79 (YFLT…INLM), 96–116 (TMMT…FWVP), 122–142 (VHMS…LLVL), 149–169 (IDPN…GWGG), 178–198 (ILAY…LYNP), 200–220 (MMLL…MLFM), 242–262 (SLIL…GFIP), 274–294 (EMII…YFYM), and 323–343 (MILL…TPLL).

Belongs to the complex I subunit 2 family. Core subunit of respiratory chain NADH dehydrogenase (Complex I) which is composed of 45 different subunits. Interacts with TMEM242.

The protein localises to the mitochondrion inner membrane. The catalysed reaction is a ubiquinone + NADH + 5 H(+)(in) = a ubiquinol + NAD(+) + 4 H(+)(out). Its function is as follows. Core subunit of the mitochondrial membrane respiratory chain NADH dehydrogenase (Complex I) that is believed to belong to the minimal assembly required for catalysis. Complex I functions in the transfer of electrons from NADH to the respiratory chain. The immediate electron acceptor for the enzyme is believed to be ubiquinone. This chain is NADH-ubiquinone oxidoreductase chain 2, found in Suricata suricatta (Meerkat).